A 267-amino-acid chain; its full sequence is MPFSTPAQPSCSAASPLRLRYIDASTAQKIDEDLMSASGGFSLDQLMELAGLSCAQAVFECYPPTKYPNVLVACGPGNQGGDGLVAARHLYHFGYEPVVWYPKQGKTELFSRLKVQLHNLGLPFVSQDDFQDALEEADVVLDSIFGFNFKGDVREPFRAPLEILKYESRIEFEARKKMPPIVSVDIPSSWHVELGNVNKAFTPSVLISLSAPKLGALAFAGRHFLGGRFLPEDLEAKFDLQLPDYPGTEQVIEITGAKPLQTQEADL.

Positions 27-242 constitute a YjeF N-terminal domain; sequence AQKIDEDLMS…DLEAKFDLQL (216 aa). Residue 78–82 participates in (6S)-NADPHX binding; it reads NQGGD. K(+) is bound by residues Gln-79 and Asp-142. (6S)-NADPHX is bound by residues 146–152 and Asp-185; that span reads GFNFKGD. Ser-188 is a binding site for K(+).

It belongs to the NnrE/AIBP family. The cofactor is K(+).

The protein localises to the cytoplasm. It localises to the mitochondrion. The enzyme catalyses (6R)-NADHX = (6S)-NADHX. It carries out the reaction (6R)-NADPHX = (6S)-NADPHX. Functionally, catalyzes the epimerization of the S- and R-forms of NAD(P)HX, a damaged form of NAD(P)H that is a result of enzymatic or heat-dependent hydration. This is a prerequisite for the S-specific NAD(P)H-hydrate dehydratase to allow the repair of both epimers of NAD(P)HX. The protein is NAD(P)H-hydrate epimerase of Mycosarcoma maydis (Corn smut fungus).